Consider the following 238-residue polypeptide: Small ribosomal subunit protein uS3 (238 aa).

One can recognise a KH type-2 domain in the interval 39–107; that stretch reads MREFIHDYAK…ELHLNIVEIR (69 aa). Over residues 212–222 the composition is skewed to basic and acidic residues; sequence PQAHDRRHSEA. A disordered region spans residues 212–238; that stretch reads PQAHDRRHSEAQEGAAPRPPRRDRERA.

Belongs to the universal ribosomal protein uS3 family. As to quaternary structure, part of the 30S ribosomal subunit. Forms a tight complex with proteins S10 and S14.

Its function is as follows. Binds the lower part of the 30S subunit head. Binds mRNA in the 70S ribosome, positioning it for translation. In Cereibacter sphaeroides (strain ATCC 17025 / ATH 2.4.3) (Rhodobacter sphaeroides), this protein is Small ribosomal subunit protein uS3.